The sequence spans 151 residues: 3-dehydroquinate dehydratase (151 aa).

The Proton acceptor role is filled by Tyr-24. Asn-76, His-82, and Asp-89 together coordinate substrate. His-102 functions as the Proton donor in the catalytic mechanism. Substrate-binding positions include 103 to 104 (LS) and Arg-113.

It belongs to the type-II 3-dehydroquinase family. Homododecamer.

It carries out the reaction 3-dehydroquinate = 3-dehydroshikimate + H2O. It participates in metabolic intermediate biosynthesis; chorismate biosynthesis; chorismate from D-erythrose 4-phosphate and phosphoenolpyruvate: step 3/7. Catalyzes a trans-dehydration via an enolate intermediate. The sequence is that of 3-dehydroquinate dehydratase from Acinetobacter baumannii (strain AB307-0294).